A 72-amino-acid polypeptide reads, in one-letter code: Alpha-elapitoxin-Ast2b (72 aa).

Intrachain disulfides connect Cys-3–Cys-20, Cys-13–Cys-41, Cys-26–Cys-30, Cys-45–Cys-56, and Cys-57–Cys-62. Arg-72 carries the arginine amide modification.

It belongs to the three-finger toxin family. Long-chain subfamily. Type II alpha-neurotoxin sub-subfamily. As to expression, expressed by the venom gland.

The protein localises to the secreted. Its function is as follows. Binds with high affinity to muscular (alpha-1/CHRNA1) and neuronal (alpha-7/CHRNA7) nicotinic acetylcholine receptor (nAChR) and inhibits acetylcholine from binding to the receptor, thereby impairing neuromuscular and neuronal transmission. In Hydrophis stokesii (Stokes's sea snake), this protein is Alpha-elapitoxin-Ast2b.